The following is a 271-amino-acid chain: Phosphate import ATP-binding protein PstB 2 (271 aa).

The tract at residues 1–20 (MLTKKPEINTILQTTPDPHS) is disordered. Positions 25–266 (MATEDLHVYY…PQEKQTEDYI (242 aa)) constitute an ABC transporter domain. An ATP-binding site is contributed by 57–64 (GPSGCGKS).

Belongs to the ABC transporter superfamily. Phosphate importer (TC 3.A.1.7) family. The complex is composed of two ATP-binding proteins (PstB), two transmembrane proteins (PstC and PstA) and a solute-binding protein (PstS).

The protein localises to the cell membrane. It catalyses the reaction phosphate(out) + ATP + H2O = ADP + 2 phosphate(in) + H(+). Part of the ABC transporter complex PstSACB involved in phosphate import. Responsible for energy coupling to the transport system. The polypeptide is Phosphate import ATP-binding protein PstB 2 (Listeria innocua serovar 6a (strain ATCC BAA-680 / CLIP 11262)).